Consider the following 193-residue polypeptide: Superoxide dismutase [Fe] (193 aa).

4 residues coordinate Fe cation: His-27, His-75, Asp-159, and His-163.

Belongs to the iron/manganese superoxide dismutase family. Homodimer. Fe cation is required as a cofactor.

It carries out the reaction 2 superoxide + 2 H(+) = H2O2 + O2. Functionally, destroys superoxide anion radicals which are normally produced within the cells and which are toxic to biological systems. The protein is Superoxide dismutase [Fe] (sodB) of Bacteroides fragilis (strain YCH46).